We begin with the raw amino-acid sequence, 379 residues long: Class V chitinase CHIT5b (379 aa).

A signal peptide spans 1 to 26 (MANILNLKHLLTLALILLALATKSST). In terms of domain architecture, GH18 spans 34–379 (RVKGIYWLEN…TQASKAWKLV (346 aa)). Asn68, Asn109, and Asn128 each carry an N-linked (GlcNAc...) asparagine glycan. Glu147 (proton donor) is an active-site residue. 3 N-linked (GlcNAc...) asparagine glycosylation sites follow: Asn192, Asn227, and Asn241.

It belongs to the glycosyl hydrolase 18 family. Chitinase class V subfamily.

The catalysed reaction is Random endo-hydrolysis of N-acetyl-beta-D-glucosaminide (1-&gt;4)-beta-linkages in chitin and chitodextrins.. It functions in the pathway glycan degradation; chitin degradation. Functionally, possesses chitinase activity in vitro toward glycol chitin, carboxymethyl-chitin, colloidal chitin, and the chitin oligosaccharides (N-acetylglucosamine) (GlcNAc)6 and (GlcNAc)5. Hydrolyzes (GlcNAc)6 into (GlcNAc)4 and (GlcNAc)2, or two (GlcNAc)3 molecules. Has the capacity to reduce hyphal growth of the fungus Trichoderma viride in an agar-plate bioassay. The chain is Class V chitinase CHIT5b from Medicago truncatula (Barrel medic).